A 504-amino-acid chain; its full sequence is Maturase K (504 aa).

The protein belongs to the intron maturase 2 family. MatK subfamily.

Its subcellular location is the plastid. It is found in the chloroplast. Its function is as follows. Usually encoded in the trnK tRNA gene intron. Probably assists in splicing its own and other chloroplast group II introns. The polypeptide is Maturase K (Fagus japonica (Japanese beech)).